Here is a 458-residue protein sequence, read N- to C-terminus: NALCN channel auxiliary factor 1 (458 aa).

Residues 40-60 (LSLASLLFFTVLLSDHLWFCA) traverse the membrane as a helical segment. Residues 70–155 (KEHQQQQRQQ…NRGKDDRGKA (86 aa)) are disordered. A compositionally biased stretch (low complexity) spans 75–96 (QQRQQQQQQQQQRQRQQQQQQR). A compositionally biased stretch (gly residues) spans 136 to 145 (GDGGGGGGKG). 7 disulfides stabilise this stretch: Cys-191–Cys-261, Cys-226–Cys-313, Cys-246–Cys-261, Cys-304–Cys-341, Cys-324–Cys-377, Cys-330–Cys-376, and Cys-334–Cys-361. Residue Asn-217 is glycosylated (N-linked (GlcNAc...) asparagine). The chain crosses the membrane as a helical span at residues 417-437 (LKLCVLVLILLHTVLTASAAQ).

It belongs to the NALF family. As to quaternary structure, component of the NALCN channel complex. NALCN complex consists of NALCN and auxiliary subunits, UNC79, UNC80 and NACL1. These auxiliary subunits are essential for the NALCN channel function.

It localises to the cell membrane. In terms of biological role, auxillary component of the NALCN sodium channel complex, a channel that regulates the resting membrane potential and controls neuronal excitability. The protein is NALCN channel auxiliary factor 1 of Homo sapiens (Human).